A 539-amino-acid polypeptide reads, in one-letter code: D-mannonate oxidoreductase (539 aa).

Residue 39 to 50 participates in NAD(+) binding; it reads WVHFGGGNIFRG.

The protein belongs to the mannitol dehydrogenase family. UxuB subfamily.

The catalysed reaction is D-mannonate + NAD(+) = keto-D-fructuronate + NADH + H(+). Its pathway is carbohydrate metabolism. Catalyzes the reduction of D-fructuronate (D-FruA) to D-mannonate (D-ManA). This Thermotoga maritima (strain ATCC 43589 / DSM 3109 / JCM 10099 / NBRC 100826 / MSB8) protein is D-mannonate oxidoreductase.